The following is a 560-amino-acid chain: DNA ligase B (560 aa).

The active-site N6-AMP-lysine intermediate is Lys-124.

The protein belongs to the NAD-dependent DNA ligase family. LigB subfamily.

The catalysed reaction is NAD(+) + (deoxyribonucleotide)n-3'-hydroxyl + 5'-phospho-(deoxyribonucleotide)m = (deoxyribonucleotide)n+m + AMP + beta-nicotinamide D-nucleotide.. Functionally, catalyzes the formation of phosphodiester linkages between 5'-phosphoryl and 3'-hydroxyl groups in double-stranded DNA using NAD as a coenzyme and as the energy source for the reaction. This chain is DNA ligase B, found in Escherichia coli O139:H28 (strain E24377A / ETEC).